A 510-amino-acid polypeptide reads, in one-letter code: Probable cytosol aminopeptidase (510 aa).

Mn(2+)-binding residues include Lys282 and Asp287. The active site involves Lys294. Residues Asp305, Asp364, and Glu366 each coordinate Mn(2+). Arg368 is an active-site residue.

The protein belongs to the peptidase M17 family. Requires Mn(2+) as cofactor.

The protein resides in the cytoplasm. The catalysed reaction is Release of an N-terminal amino acid, Xaa-|-Yaa-, in which Xaa is preferably Leu, but may be other amino acids including Pro although not Arg or Lys, and Yaa may be Pro. Amino acid amides and methyl esters are also readily hydrolyzed, but rates on arylamides are exceedingly low.. It catalyses the reaction Release of an N-terminal amino acid, preferentially leucine, but not glutamic or aspartic acids.. Presumably involved in the processing and regular turnover of intracellular proteins. Catalyzes the removal of unsubstituted N-terminal amino acids from various peptides. This chain is Probable cytosol aminopeptidase, found in Cupriavidus metallidurans (strain ATCC 43123 / DSM 2839 / NBRC 102507 / CH34) (Ralstonia metallidurans).